The primary structure comprises 270 residues: Phosphatidylglycerol--prolipoprotein diacylglyceryl transferase (270 aa).

Transmembrane regions (helical) follow at residues 19–39 (FPVY…LWLA), 56–76 (LVLI…VIFE), 92–112 (QGGL…ILFA), and 116–136 (GVSF…GQAI). Arg-138 contributes to the a 1,2-diacyl-sn-glycero-3-phospho-(1'-sn-glycerol) binding site. 3 helical membrane passes run 178–198 (HPTF…LLAL), 206–226 (GELF…VEGL), and 236–256 (LRIA…FIIV).

It belongs to the Lgt family.

Its subcellular location is the cell membrane. It catalyses the reaction L-cysteinyl-[prolipoprotein] + a 1,2-diacyl-sn-glycero-3-phospho-(1'-sn-glycerol) = an S-1,2-diacyl-sn-glyceryl-L-cysteinyl-[prolipoprotein] + sn-glycerol 1-phosphate + H(+). It participates in protein modification; lipoprotein biosynthesis (diacylglyceryl transfer). In terms of biological role, catalyzes the transfer of the diacylglyceryl group from phosphatidylglycerol to the sulfhydryl group of the N-terminal cysteine of a prolipoprotein, the first step in the formation of mature lipoproteins. This is Phosphatidylglycerol--prolipoprotein diacylglyceryl transferase from Bacillus cereus (strain G9842).